A 547-amino-acid polypeptide reads, in one-letter code: Elongator complex protein 3 (547 aa).

Residues 82–372 enclose the Radical SAM core domain; that stretch reads RTASGIAVVA…YRVQRDIPMP (291 aa). [4Fe-4S] cluster contacts are provided by C99, C109, and C112. A Phosphoserine modification is found at S161. K164 is a binding site for acetyl-CoA. At Y202 the chain carries Phosphotyrosine; by ALK. The residue at position 229 (K229) is an N6-methyllysine. Y251 carries the phosphotyrosine modification. The region spanning 396–547 is the N-acetyltransferase domain; it reads IQCRDVRTRE…QGPYMVKMLK (152 aa). Residues 474–477, 497–499, and Y530 contribute to the acetyl-CoA site; these read ELHV and FGM.

The protein belongs to the ELP3 family. Component of the elongator complex which consists of ELP1, ELP2, ELP3, ELP4, ELP5 and ELP6. ELP1, ELP2 and ELP3 form the elongator core complex. Interacts with alpha-tubulin. The cofactor is [4Fe-4S] cluster. In terms of processing, tyrosine-phosphorylated; phosphorylation on Tyr-202 does not affect elongator complex integrity or ELP3 protein stability. Also serine/threonine-phosphorylated. In terms of tissue distribution, expressed in the cerebellum and spinal motor neurons.

It localises to the cytoplasm. It is found in the nucleus. The enzyme catalyses uridine(34) in tRNA + acetyl-CoA + S-adenosyl-L-methionine + H2O = 5-(carboxymethyl)uridine(34) in tRNA + 5'-deoxyadenosine + L-methionine + CoA + 2 H(+). It participates in tRNA modification; 5-methoxycarbonylmethyl-2-thiouridine-tRNA biosynthesis. Its function is as follows. Catalytic tRNA acetyltransferase subunit of the elongator complex which is required for multiple tRNA modifications, including mcm5U (5-methoxycarbonylmethyl uridine), mcm5s2U (5-methoxycarbonylmethyl-2-thiouridine), and ncm5U (5-carbamoylmethyl uridine). In the elongator complex, acts as a tRNA uridine(34) acetyltransferase by mediating formation of carboxymethyluridine in the wobble base at position 34 in tRNAs. May also act as a protein lysine acetyltransferase by mediating acetylation of target proteins; such activity is however unclear in vivo and recent evidences suggest that ELP3 primarily acts as a tRNA acetyltransferase. Involved in neurogenesis: regulates the migration and branching of projection neurons in the developing cerebral cortex, through a process depending on alpha-tubulin acetylation. Required for acetylation of GJA1 in the developing cerebral cortex. The polypeptide is Elongator complex protein 3 (Homo sapiens (Human)).